Reading from the N-terminus, the 226-residue chain is Probable GPI-anchored adhesin-like protein PGA28 (226 aa).

Positions 1 to 26 are cleaved as a signal peptide; sequence MKFFAYFAVIALSSASLINLFKRATA. The segment at 119–209 is disordered; it reads DTEATTGSDT…SQQTSSHAGG (91 aa). Positions 131-148 are enriched in low complexity; the sequence is KAATGATTSAGTGVTKTS. Positions 149–160 are enriched in polar residues; sequence ETGGVSSTANSE. The span at 161–208 shows a compositional bias: low complexity; the sequence is AKSGSVTTSKSGSTSISESKTTSGSSSSGKSSSSTSSASSQQTSSHAG. Residue Ser197 is the site of GPI-anchor amidated serine attachment. Positions 198–226 are cleaved as a propeptide — removed in mature form; sequence ASSQQTSSHAGGASGAFVSLLGLFAALLI.

Post-translationally, predicted to be a cleavage substrate for KEX2.

Its subcellular location is the cell membrane. Its function is as follows. Putative adhesin which is involved in cell adhesion and virulence. Plays a role in Candida-bacterial interactions and subsequent regulation of filamentation. The protein is Probable GPI-anchored adhesin-like protein PGA28 (PGA28) of Candida albicans (strain SC5314 / ATCC MYA-2876) (Yeast).